The following is a 294-amino-acid chain: 4-hydroxy-tetrahydrodipicolinate synthase (294 aa).

Residue T45 coordinates pyruvate. Y133 serves as the catalytic Proton donor/acceptor. The Schiff-base intermediate with substrate role is filled by K162. I204 contacts pyruvate.

This sequence belongs to the DapA family. Homotetramer; dimer of dimers.

The protein localises to the cytoplasm. It carries out the reaction L-aspartate 4-semialdehyde + pyruvate = (2S,4S)-4-hydroxy-2,3,4,5-tetrahydrodipicolinate + H2O + H(+). Its pathway is amino-acid biosynthesis; L-lysine biosynthesis via DAP pathway; (S)-tetrahydrodipicolinate from L-aspartate: step 3/4. Functionally, catalyzes the condensation of (S)-aspartate-beta-semialdehyde [(S)-ASA] and pyruvate to 4-hydroxy-tetrahydrodipicolinate (HTPA). The protein is 4-hydroxy-tetrahydrodipicolinate synthase of Bartonella quintana (strain Toulouse) (Rochalimaea quintana).